The chain runs to 515 residues: ATP synthase subunit alpha (515 aa).

171–178 contacts ATP; sequence GDRQTGKT.

It belongs to the ATPase alpha/beta chains family. In terms of assembly, F-type ATPases have 2 components, CF(1) - the catalytic core - and CF(0) - the membrane proton channel. CF(1) has five subunits: alpha(3), beta(3), gamma(1), delta(1), epsilon(1). CF(0) has three main subunits: a(1), b(2) and c(9-12). The alpha and beta chains form an alternating ring which encloses part of the gamma chain. CF(1) is attached to CF(0) by a central stalk formed by the gamma and epsilon chains, while a peripheral stalk is formed by the delta and b chains.

The protein localises to the cell inner membrane. The catalysed reaction is ATP + H2O + 4 H(+)(in) = ADP + phosphate + 5 H(+)(out). In terms of biological role, produces ATP from ADP in the presence of a proton gradient across the membrane. The alpha chain is a regulatory subunit. The polypeptide is ATP synthase subunit alpha (Xylella fastidiosa (strain Temecula1 / ATCC 700964)).